A 132-amino-acid polypeptide reads, in one-letter code: Glycine cleavage system H protein (132 aa).

The region spanning 24–106 (IATIGLSAFA…YGDGWLIKVR (83 aa)) is the Lipoyl-binding domain. Lysine 65 carries the post-translational modification N6-lipoyllysine.

Belongs to the GcvH family. As to quaternary structure, the glycine cleavage system is composed of four proteins: P, T, L and H. (R)-lipoate is required as a cofactor.

In terms of biological role, the glycine cleavage system catalyzes the degradation of glycine. The H protein shuttles the methylamine group of glycine from the P protein to the T protein. In Rippkaea orientalis (strain PCC 8801 / RF-1) (Cyanothece sp. (strain PCC 8801)), this protein is Glycine cleavage system H protein.